The primary structure comprises 402 residues: Selenoprotein P (402 aa).

The N-terminal stretch at 1 to 19 (MWRGLGLALALCLLLTGGT) is a signal peptide. U59 is a non-standard amino acid (selenocysteine). N83 and N174 each carry an N-linked (GlcNAc...) asparagine glycan. Positions 196-291 (KTAEASQRHH…VGSESLQPSL (96 aa)) are disordered. A compositionally biased stretch (basic residues) spans 203–231 (RHHHPHPHSHPHPHPHPHPHPHPHPHHGH). Tandem repeats lie at residues 204-205 (HH), 206-207 (HP), 208-209 (HP), 210-211 (HS), 212-213 (HP), 214-215 (HP), 216-217 (HP), 218-219 (HP), 220-221 (HP), 222-223 (HP), 224-225 (HP), 226-227 (HP), and 228-229 (HH). The interval 204–229 (HHHPHPHSHPHPHPHPHPHPHPHPHH) is 13 X 2 AA tandem repeats of H-[PHS]. Residues 232–247 (QLHENAHLSESPKPDT) are compositionally biased toward basic and acidic residues. Positions 259 to 269 (LHHHHHRHKGP) are enriched in basic residues. The residue at position 284 (S284) is a Phosphoserine. 11 non-standard amino acids (selenocysteine) are found at residues U297, U307, U338, U350, U363, U365, U372, U388, U390, U397, and U399. Residues 367 to 402 (LPPAAUQAAGQQLNPTEASTKUSUKNKAKMUKUPSN) form a disordered region.

The protein belongs to the selenoprotein P family. Phosphorylation sites are present in the extracellular medium. In terms of tissue distribution, brain and kidney. Most prominently expressed in the cerebellar cortex, hippocampus and olfactory bulb.

Its subcellular location is the secreted. Its function is as follows. Constitutes a major selenium pool in the brain and may play an important role in developing and/or modulating the morphology of neurons and/or glial cells. This chain is Selenoprotein P, found in Bos taurus (Bovine).